The chain runs to 177 residues: Large ribosomal subunit protein uL10 (177 aa).

Belongs to the universal ribosomal protein uL10 family. Part of the ribosomal stalk of the 50S ribosomal subunit. The N-terminus interacts with L11 and the large rRNA to form the base of the stalk. The C-terminus forms an elongated spine to which L12 dimers bind in a sequential fashion forming a multimeric L10(L12)X complex.

Its function is as follows. Forms part of the ribosomal stalk, playing a central role in the interaction of the ribosome with GTP-bound translation factors. This is Large ribosomal subunit protein uL10 from Legionella pneumophila (strain Corby).